Reading from the N-terminus, the 665-residue chain is Beta-galactosidase LacZ (665 aa).

Arginine 110 serves as a coordination point for substrate. A Zn(2+)-binding site is contributed by cysteine 114. Asparagine 148 serves as a coordination point for substrate. The active-site Proton donor is the glutamate 149. Positions 157, 159, and 162 each coordinate Zn(2+). Catalysis depends on glutamate 303, which acts as the Nucleophile. Substrate-binding positions include tryptophan 311 and 351–354 (EKFH).

Belongs to the glycosyl hydrolase 42 family.

It carries out the reaction Hydrolysis of terminal non-reducing beta-D-galactose residues in beta-D-galactosides.. The protein is Beta-galactosidase LacZ of Heyndrickxia coagulans (Weizmannia coagulans).